The following is a 161-amino-acid chain: Nucleotide-binding protein PFLU_4927 (161 aa).

The protein belongs to the YajQ family.

Nucleotide-binding protein. This is Nucleotide-binding protein PFLU_4927 from Pseudomonas fluorescens (strain SBW25).